A 213-amino-acid polypeptide reads, in one-letter code: Orotate phosphoribosyltransferase (213 aa).

A 5-phospho-alpha-D-ribose 1-diphosphate-binding site is contributed by K26. Position 34 to 35 (F34 to F35) interacts with orotate. Residues Y72–K73, R99, K100, K103, H105, and D124–A132 contribute to the 5-phospho-alpha-D-ribose 1-diphosphate site. Orotate-binding residues include T128 and R156.

The protein belongs to the purine/pyrimidine phosphoribosyltransferase family. PyrE subfamily. Homodimer. Mg(2+) serves as cofactor.

It catalyses the reaction orotidine 5'-phosphate + diphosphate = orotate + 5-phospho-alpha-D-ribose 1-diphosphate. It functions in the pathway pyrimidine metabolism; UMP biosynthesis via de novo pathway; UMP from orotate: step 1/2. Functionally, catalyzes the transfer of a ribosyl phosphate group from 5-phosphoribose 1-diphosphate to orotate, leading to the formation of orotidine monophosphate (OMP). This chain is Orotate phosphoribosyltransferase, found in Cronobacter sakazakii (strain ATCC BAA-894) (Enterobacter sakazakii).